The chain runs to 2033 residues: MFWHQPRQQQLRQLQRAASGAGKHQRRSPPQTLGDDGDAAAQVPPSPTGALLAFLNQHASEEGGAAAASADGRVSVSPGFCSSILPEHSQDLFAFSDPTSASPQPVPMDASLSLFTPPVPDCGRDVGEEAEGAVAPSWRAPLPAPQWRPVHGPSWWLSSSSPSGSSRGSVTSPQYSGEETSDAASGAPTPPPQSSGSSYVYGQALADLMAMIQEIPAPPRSVPDCRRGEPVSEDGMADRCETDASCYTTDEPMEAEPSEPAGGVSWLGERADRMRADQSPRGLGAEPHVAEAGRPSSCVGEERADVVAIAAVEERKEAARRSPDAERNDDEEEYESLPCAQEFFTSQELAEINARAIAESDEAEDEDAGSPAARSQSSPFPSLGPAVFVLAPTSAKSSRGMRKKAIAVSRVVPDNDGEPDPCADGPGRDHVSSAQSAGANGALETETSVPRSATAPAGAVAACAQNTKRGYWRGAAAGHAEEETDSDDEDVLVVDVSACAEPFESFAQRQQPRQQQHAPRNKPARQRLRAGAIVAAASGNTLTVPSEPPHPSLAPLWKMLNLWLSEEWPAQGGGQDEGEAAVSASLLAPGSLPELPDMCPRVAVGIISHALAVDLSAPGGRITVDEALLPKPPAADYVYYGKTGYRPSMAAHPDVRRAAEEFSASDAAARVYVEEFGMAVEQHERLVAEFMLQPLSRVSHSYGGSRLNKTEKNLCKICLPPDGGDDRDGGGKSRGGRGGGSKDASRTAMATGVPHIVHAMRDGRAALALPHLMDVIRVCRRYDASQKTYLLSCLRLAFAPLVFPGASPPVGADDSPWPTSPIRECAAALREGFRALNDIRAEQDPPADERSRELALPLDRAITAARRVAATAAGLLNAVGASVVHDGRVGLPAFFLRGVTERREDLFSAARRCPRALYSWERSMRATTAALWGHLASRGPIAAPVADLEELSQALSAVLSVTSVPDGGDVRYAFAEADEGWRALAVMLGGGAVRTSSGESGDAETDAAYALLAPGKQSSAGVNHPRGRPGRATASSPRTPASRPPHGSAAAPPSGRDSPPGALNVPEAAEEELRLAAARDTTGDLLSDEAGTDDDGDAPVVISYVGPSSPPGVEDPSPDGLAALRPLPEGYVPRPGDVLRGDPGADENDDDARAPCRVGDASPPRQLPSSSSFASSSLASAVPGDPYLPRSVAEPTLCRLAEHLQSDDGWTRAFANDPVGLAEFARRSTPGRRLGGQRRLDQLLSWTRRHSPRRRYSLIVLVSEKRPGDFRERAYAAAALAGRACVPGSACDPETWRDAEDHPSPSADAQSPLRSRPSRDCFPPRIAQPEASDDDDVGEGGTALLSAGDIGFAGAVESMLRRALSRQGQACAVVDARDDKDVLSAAAPRFPRGKPGLIYLRVAPPSEACVANLPSLGPSASPHRGVGGKHRDKRPCLAEGTPSAPSCRDAARATAPLSGDPVAHRLLMHRPAKPLVGEEACAALLGGKAGRRGQDVPLPFLTAATLRKVARVARELDPGWGHGDLGCESAVVFPPAAPPGPELADRHADRRRSTKGPQRPGGKRPRSSSSSSSASHDRSPSSSSRRRDGRPSSRRRPSRRMSARPPSRPPAAVILRASWRYAEEVAREMLDAAASRFDEADGEDPLPPAACGGKPIAPETLVALCEQRGRGPTSLPRAPTPRSGEALAAPRRSGAKDPRQGQYCPSARRSEAPHSPSPRDVALRLLERQQELNRQLLLELRRGSCEISPSPRRRDAEGRRFGCRQDDDDGYDYEGGRESPERVLGRRQSRRDSVPVRRRSGAANCGGRWMISAGRSSSSSSSSSSSSSSSPSSRPSRSATPSLSPSPSPPRRAPVDRSRSGRRRERDRPSANPFRWAPRQRSRADHSPDGTAPGDAPLNLEDGPGRGRPIWTPSSATTLPSRSGPEDSVDETETEDSAPPARLAPSPLETSRAEDSEDSEYPEYSNPRLGKSPPALKSREARRPSSKQPRRPSSGKNGHTDVSAASAFFLGRPAPGSCGRRPLGARVRGGTER.

Residues 1 to 16 (MFWHQPRQQQLRQLQR) are compositionally biased toward low complexity. Disordered stretches follow at residues 1 to 47 (MFWH…PPSP), 95 to 145 (FSDP…LPAP), 157 to 199 (LSSS…GSSY), 218 to 240 (PPRS…ADRC), 277 to 301 (DQSP…CVGE), 313 to 338 (EERK…ESLP), 350 to 461 (AEIN…GAVA), 505 to 527 (SFAQ…ARQR), 719 to 747 (LPPD…ASRT), 1015 to 1064 (GKQS…GALN), 1085 to 1186 (LLSD…PGDP), 1294 to 1342 (ETWR…EGGT), 1420 to 1451 (ASPH…RDAA), 1531 to 1612 (VVFP…PPAA), 1636 to 1655 (RFDE…GGKP), 1664 to 1718 (LCEQ…SPSP), and 1746 to 2033 (EISP…GTER). Residues 157-173 (LSSSSPSGSSRGSVTSP) show a composition bias toward low complexity. Basic and acidic residues predominate over residues 223–240 (PDCRRGEPVSEDGMADRC). Over residues 313–326 (EERKEAARRSPDAE) the composition is skewed to basic and acidic residues. Acidic residues predominate over residues 359-368 (ESDEAEDEDA). Over residues 507-518 (AQRQQPRQQQHA) the composition is skewed to low complexity. The span at 732–741 (KSRGGRGGGS) shows a compositional bias: gly residues. Residues 1031–1056 (RATASSPRTPASRPPHGSAAAPPSGR) show a composition bias toward low complexity. The span at 1086 to 1097 (LSDEAGTDDDGD) shows a compositional bias: acidic residues. Over residues 1169–1181 (SSSSFASSSLASA) the composition is skewed to low complexity. Basic and acidic residues predominate over residues 1294–1303 (ETWRDAEDHP). Residues 1575-1591 (SHDRSPSSSSRRRDGRP) show a composition bias toward basic and acidic residues. Residues 1592–1602 (SSRRRPSRRMS) show a composition bias toward basic residues. 2 stretches are compositionally biased toward basic and acidic residues: residues 1752–1765 (RRRD…GCRQ) and 1774–1795 (EGGR…DSVP). Residues 1812-1843 (SAGRSSSSSSSSSSSSSSSPSSRPSRSATPSL) show a composition bias toward low complexity. Residues 1853 to 1869 (APVDRSRSGRRRERDRP) are compositionally biased toward basic and acidic residues. The segment covering 1912–1921 (TPSSATTLPS) has biased composition (polar residues). Acidic residues predominate over residues 1927 to 1936 (DSVDETETED). A compositionally biased stretch (low complexity) spans 1937 to 1948 (SAPPARLAPSPL).

This sequence belongs to the herpesviridae ICP4 family. A long stretch of serine residues may be a major site of phosphorylation.

The protein localises to the host nucleus. Functionally, this IE protein is a multifunctional protein capable of migrating to the nucleus, binding to DNA, trans-activating other viral genes, and autoregulating its own synthesis. It is required for the switch from immediate-early to early mode of gene expression. The chain is Major viral transcription factor ICP4 homolog (ICP4B) from Amazona oratrix (yellow-headed parrot).